Reading from the N-terminus, the 341-residue chain is MSGISFKSFVQSQYTPIPLPNHDFTGQTILITGASRGLGLEAASHFYRLNASKIILAVRDARKGPECIAFVRQYNPSSNTTVECWELDLTNVETIRQFVAKAKNLARLDAVILNAGMATMSFQAIDGMEKTLATNVTGTFLLAIGLLPALRLSGLRNNIRPRMVLVSSQGHEAAAFAERDADDIFAALNDADKTDMTDRYDTSKLIQLLAFYALKDTVDKSWPDSITFTAVDPGLCDTDLTRDIPLLIRIIHRIMKMLLARTAEVGGRCLVLGAADDEHSHGAYFKDGVIGSPPVAVTDPEGVELKNRVFSQLKSLLYSVDPQIMDACPVMESDEEAIRLN.

NADP(+)-binding residues include Leu38, Lys63, Asp88, and Asn114. Residues Ser167 and Tyr200 each act as proton donor in the active site. NADP(+) is bound by residues Tyr200 and Lys204. Lys204 (lowers pKa of active site Tyr) is an active-site residue.

It belongs to the short-chain dehydrogenases/reductases (SDR) family.

It participates in secondary metabolite biosynthesis. In terms of biological role, short chain dehydrogenase; part of the Fg3_54/C64 gene cluster that mediates the biosynthesis of the octapeptide fusaoctaxin A, a virulence factor that is required for cell-to-cell invasiveness of plant host. The 2 nonribosomal peptide synthetases NRPS9 and NRPS5 form an assembly line which likely utilizes GABA as a starter unit (loaded on the unique module M1 of NRPS9) and sequentially incorporates seven extender units composed of the residues L-Ala, L-allo-Ile, L-Ser, L-Val, L-Ser, L-Leu and L-Leu, respectively. During the process, each of the residues that are tethered on modules M3-M7 of NRPS5 containing an E domain can undergo an epimerization reaction to produce a D-configuration before the transpeptidation reaction occurs. The elongation of the peptidyl chain might be terminated by module M8-mediated L-Leu incorporation, followed by R domain-catalyzed 4 electron reduction to release the resulting octapeptide from the assembly line as an alcohol. Fusaoctaxin A is cleaved by the cluster specific ABC transporter FGM5 to the pentapeptide fusapentaxin A and the tripeptide fusatrixin A. The other enzymes from the cluster, FGM1, FGM2, FGM3 and FGM9 seem not to be involved in the biosynthesis of fusaoctaxin A and their functions have still to be determined. In Gibberella zeae (strain ATCC MYA-4620 / CBS 123657 / FGSC 9075 / NRRL 31084 / PH-1) (Wheat head blight fungus), this protein is Short chain dehydrogenase FGM9.